Consider the following 186-residue polypeptide: DNA damage up-regulated protein (186 aa).

The disordered stretch occupies residues 147–166; the sequence is ATENGEGCRPARDPASSPSS.

In terms of assembly, interacts with DNA damage response proteins ATR, H2AX, PCNA, RAD18 and RAD51C. Forms a complex with H2AX and RAD18 following DDUP phosphorylation. Phosphorylated in an ATR-dependent manner; phosphorylation is required for interaction with H2AX and RAD18 and for DDUP-mediated DNA damage repair.

It is found in the nucleus. The protein localises to the chromosome. In terms of biological role, promotes DNA damage repair through both homologous recombination repair (HRR) and post-replication repair (PRR) mechanisms. Enhances the retention of DNA damage response protein RAD18 at sites of DNA damage. This allows for HRR via association of RAD18 with RAD51C and for PRR via RAD18-mediated promotion of PCNA monoubiquitination. The sequence is that of DNA damage up-regulated protein from Homo sapiens (Human).